The following is a 152-amino-acid chain: Lipoprotein signal peptidase (152 aa).

The next 3 membrane-spanning stretches (helical) occupy residues 5–25 (LFVL…FWIV), 61–81 (WFFV…LATH), and 84–104 (LNIW…GNFI). Active-site residues include aspartate 114 and aspartate 130. Residues 125–145 (IFNVADSYLTVGVILLVICLW) form a helical membrane-spanning segment.

Belongs to the peptidase A8 family.

The protein resides in the cell membrane. The catalysed reaction is Release of signal peptides from bacterial membrane prolipoproteins. Hydrolyzes -Xaa-Yaa-Zaa-|-(S,diacylglyceryl)Cys-, in which Xaa is hydrophobic (preferably Leu), and Yaa (Ala or Ser) and Zaa (Gly or Ala) have small, neutral side chains.. Its pathway is protein modification; lipoprotein biosynthesis (signal peptide cleavage). This protein specifically catalyzes the removal of signal peptides from prolipoproteins. This chain is Lipoprotein signal peptidase, found in Streptococcus pyogenes serotype M3 (strain ATCC BAA-595 / MGAS315).